An 890-amino-acid polypeptide reads, in one-letter code: Translation initiation factor IF-2 (890 aa).

The tract at residues 45–302 (LIDHLNQKNS…SSLQQGFQKP (258 aa)) is disordered. Residues 67-81 (STLNIPSTGGKSKSV) show a composition bias toward polar residues. Residues 92 to 217 (VKRDPQEAER…RMAEENKWTD (126 aa)) are compositionally biased toward basic and acidic residues. A compositionally biased stretch (basic residues) spans 252–266 (GRGRNAKAARPKKGN). Residues 267 to 280 (KHAESKADREEARA) are compositionally biased toward basic and acidic residues. A tr-type G domain is found at 389–558 (PRAPVVTIMG…LLQAEVLELK (170 aa)). The segment at 398-405 (GHVDHGKT) is G1. Residue 398 to 405 (GHVDHGKT) coordinates GTP. The G2 stretch occupies residues 423 to 427 (GITQH). The G3 stretch occupies residues 444–447 (DTPG). GTP is bound by residues 444 to 448 (DTPGH) and 498 to 501 (NKID). Residues 498 to 501 (NKID) are G4. Positions 534 to 536 (SAK) are G5. Residue lysine 808 is modified to N6-acetyllysine.

This sequence belongs to the TRAFAC class translation factor GTPase superfamily. Classic translation factor GTPase family. IF-2 subfamily.

The protein resides in the cytoplasm. One of the essential components for the initiation of protein synthesis. Protects formylmethionyl-tRNA from spontaneous hydrolysis and promotes its binding to the 30S ribosomal subunits. Also involved in the hydrolysis of GTP during the formation of the 70S ribosomal complex. The polypeptide is Translation initiation factor IF-2 (Shigella dysenteriae serotype 1 (strain Sd197)).